Consider the following 158-residue polypeptide: Cyclic pyranopterin monophosphate synthase (158 aa).

Residues 76–78 and 114–115 contribute to the substrate site; these read LCH and ME. Residue Asp129 is part of the active site.

It belongs to the MoaC family. In terms of assembly, homohexamer; trimer of dimers.

The enzyme catalyses (8S)-3',8-cyclo-7,8-dihydroguanosine 5'-triphosphate = cyclic pyranopterin phosphate + diphosphate. It functions in the pathway cofactor biosynthesis; molybdopterin biosynthesis. Its function is as follows. Catalyzes the conversion of (8S)-3',8-cyclo-7,8-dihydroguanosine 5'-triphosphate to cyclic pyranopterin monophosphate (cPMP). The polypeptide is Cyclic pyranopterin monophosphate synthase (Shewanella loihica (strain ATCC BAA-1088 / PV-4)).